The sequence spans 174 residues: Guided entry of tail-anchored proteins factor 1 (174 aa).

Over 1 to 8 the chain is Lumenal; it reads MSASETDR. A helical transmembrane segment spans residues 9–29; sequence WAWLLVLSFVFGCNLLRILLP. Over 30 to 99 the chain is Cytoplasmic; the sequence is SLSSFISRVL…VKARTAQLAK (70 aa). Positions 39–94 form a coiled coil; the sequence is LQKDAEQESQMRAEIQGMKQELSTVNMMDEFARYARLERKINKMTDKLKTHVKART. The tract at residues 39 to 97 is interaction with GET3/TRC40; sequence LQKDAEQESQMRAEIQGMKQELSTVNMMDEFARYARLERKINKMTDKLKTHVKARTAQL. A helical transmembrane segment spans residues 100 to 120; the sequence is IKWFISVAFYILQAALMISLI. Over 121 to 148 the chain is Lumenal; the sequence is WKYYSVPVAVVPSKWITPLDRLVAFPTR. A helical membrane pass occupies residues 149–169; that stretch reads VAGGIGITCWILVCNKVVAIV. At 170–174 the chain is on the cytoplasmic side; sequence LHPFS.

Belongs to the WRB/GET1 family. As to quaternary structure, component of the Golgi to ER traffic (GET) complex, which is composed of GET1, CAMLG/GET2 and GET3. Within the complex, GET1 and CAMLG form a heterotetramer which is stabilized by phosphatidylinositol binding and which binds to the GET3 homodimer. Interacts with CAMLG/GET2 (via C-terminus). GET3 shows a higher affinity for CAMLG than for GET1.

Its subcellular location is the endoplasmic reticulum membrane. In terms of biological role, required for the post-translational delivery of tail-anchored (TA) proteins to the endoplasmic reticulum. Together with CAMLG/GET2, acts as a membrane receptor for soluble GET3/TRC40, which recognizes and selectively binds the transmembrane domain of TA proteins in the cytosol. Required to ensure correct topology and ER insertion of CAMLG. The polypeptide is Guided entry of tail-anchored proteins factor 1 (Mus musculus (Mouse)).